The primary structure comprises 88 residues: Small ribosomal subunit protein bS16c (88 aa).

Belongs to the bacterial ribosomal protein bS16 family.

The protein resides in the plastid. Its subcellular location is the chloroplast. The chain is Small ribosomal subunit protein bS16c from Lactuca sativa (Garden lettuce).